Consider the following 305-residue polypeptide: UDP-3-O-acyl-N-acetylglucosamine deacetylase (305 aa).

3 residues coordinate Zn(2+): His-78, His-237, and Asp-241. His-264 acts as the Proton donor in catalysis.

Belongs to the LpxC family. Zn(2+) serves as cofactor.

It carries out the reaction a UDP-3-O-[(3R)-3-hydroxyacyl]-N-acetyl-alpha-D-glucosamine + H2O = a UDP-3-O-[(3R)-3-hydroxyacyl]-alpha-D-glucosamine + acetate. It participates in glycolipid biosynthesis; lipid IV(A) biosynthesis; lipid IV(A) from (3R)-3-hydroxytetradecanoyl-[acyl-carrier-protein] and UDP-N-acetyl-alpha-D-glucosamine: step 2/6. Catalyzes the hydrolysis of UDP-3-O-myristoyl-N-acetylglucosamine to form UDP-3-O-myristoylglucosamine and acetate, the committed step in lipid A biosynthesis. The chain is UDP-3-O-acyl-N-acetylglucosamine deacetylase from Burkholderia cenocepacia (strain ATCC BAA-245 / DSM 16553 / LMG 16656 / NCTC 13227 / J2315 / CF5610) (Burkholderia cepacia (strain J2315)).